A 550-amino-acid polypeptide reads, in one-letter code: Glucose-6-phosphate isomerase 1 (550 aa).

The active-site Proton donor is Glu-353. Catalysis depends on residues His-384 and Lys-512.

This sequence belongs to the GPI family.

It is found in the cytoplasm. The enzyme catalyses alpha-D-glucose 6-phosphate = beta-D-fructose 6-phosphate. Its pathway is carbohydrate biosynthesis; gluconeogenesis. It participates in carbohydrate degradation; glycolysis; D-glyceraldehyde 3-phosphate and glycerone phosphate from D-glucose: step 2/4. Catalyzes the reversible isomerization of glucose-6-phosphate to fructose-6-phosphate. This is Glucose-6-phosphate isomerase 1 from Thiobacillus denitrificans (strain ATCC 25259 / T1).